Here is a 314-residue protein sequence, read N- to C-terminus: MEQLCKRYVHTPAAFIQNIVANTKRTTLATQLSVEKAKKKVPKTALKKKLNSRPKERLPNWLKLNDVFNIHYEKPSNSDINKVNRFFNKAKVEFEWCAASFDDIPENPFLNKKSHKDILKDHGECGTTLIDTLPEVIFLGGTNVGKSSILNNITTSHVSRDLGSLARVSKTTGFTKTLNCYNVGNRLRMIDSPGYGFNSSKEQGKVTLQYLLERKQLVRCFLLLAGDKEINNTDNMIIQYIHEHGVPFEVVFTKMDKVKDLNKFKKKVMSSGLMDLPTLPRLVLTNSLTSSTSPKRFGIDLLRYVIFQSCGLIL.

One can recognise an EngB-type G domain in the interval 132–312 (TLPEVIFLGG…RYVIFQSCGL (181 aa)). GTP is bound by residues 140–147 (GGTNVGKS), 173–177 (GFTKT), 191–194 (DSPG), 253–256 (TKMD), and 290–292 (SST). Residues Ser147 and Thr175 each coordinate Mg(2+).

The protein belongs to the TRAFAC class TrmE-Era-EngA-EngB-Septin-like GTPase superfamily. EngB GTPase family. As to quaternary structure, associates with the mitochondrial ribosome. Requires Mg(2+) as cofactor. Post-translationally, sumoylated upon ethanol stress.

The protein localises to the mitochondrion. Component of MIOREX complexes, large expressome-like assemblies of ribosomes with factors involved in all the steps of post-transcriptional gene expression. The sequence is that of MIOREX complex component 8 from Saccharomyces cerevisiae (strain ATCC 204508 / S288c) (Baker's yeast).